A 294-amino-acid polypeptide reads, in one-letter code: Pyridoxal 5'-phosphate synthase subunit PdxS (294 aa).

Asp24 serves as a coordination point for D-ribose 5-phosphate. Lys81 acts as the Schiff-base intermediate with D-ribose 5-phosphate in catalysis. Residue Gly153 coordinates D-ribose 5-phosphate. Residue Arg165 participates in D-glyceraldehyde 3-phosphate binding. D-ribose 5-phosphate is bound by residues Gly214 and 235–236 (GS).

The protein belongs to the PdxS/SNZ family. In terms of assembly, in the presence of PdxT, forms a dodecamer of heterodimers.

It carries out the reaction aldehydo-D-ribose 5-phosphate + D-glyceraldehyde 3-phosphate + L-glutamine = pyridoxal 5'-phosphate + L-glutamate + phosphate + 3 H2O + H(+). It participates in cofactor biosynthesis; pyridoxal 5'-phosphate biosynthesis. In terms of biological role, catalyzes the formation of pyridoxal 5'-phosphate from ribose 5-phosphate (RBP), glyceraldehyde 3-phosphate (G3P) and ammonia. The ammonia is provided by the PdxT subunit. Can also use ribulose 5-phosphate and dihydroxyacetone phosphate as substrates, resulting from enzyme-catalyzed isomerization of RBP and G3P, respectively. The protein is Pyridoxal 5'-phosphate synthase subunit PdxS of Bacillus pumilus (strain SAFR-032).